The primary structure comprises 240 residues: Putative peptidoglycan hydrolase Rv2525c (240 aa).

The segment at residues 1-33 (MSVSRRDVLKFAAATPGVLGLGVVASSLRAAPA) is a signal peptide (tat-type signal).

In terms of processing, predicted to be exported by the Tat system. The position of the signal peptide cleavage has not been experimentally proven.

It is found in the secreted. It catalyses the reaction Hydrolysis of (1-&gt;4)-beta-linkages between N-acetylmuramic acid and N-acetyl-D-glucosamine residues in a peptidoglycan and between N-acetyl-D-glucosamine residues in chitodextrins.. The protein operates within cell wall degradation; peptidoglycan degradation. In terms of biological role, may function as a peptidoglycan hydrolase with glycosidase activity. In vitro, displays esterase activity toward p-nitrophenyl esters of various acyl chain length (C4 to C16), with a preference for p-nitrophenyl butyrate (C4). This Mycobacterium tuberculosis (strain ATCC 25618 / H37Rv) protein is Putative peptidoglycan hydrolase Rv2525c.